Consider the following 342-residue polypeptide: Serine/threonine-protein kinase SAPK1 (342 aa).

One can recognise a Protein kinase domain in the interval 4-260 (YEVMRDIGSG…IPEIKNHPWF (257 aa)). ATP-binding positions include 10-18 (IGSGNFGVA) and lysine 33. The active-site Proton acceptor is the aspartate 123. Residues 253 to 342 (EIKNHPWFLK…ENSGDFVCAL (90 aa)) form a C-terminal region.

It belongs to the protein kinase superfamily. Ser/Thr protein kinase family. In terms of processing, phosphorylated. In terms of tissue distribution, expressed in leaf blades, leaf sheaths and roots. Expressed in shoots and roots of young seedlings.

The enzyme catalyses L-seryl-[protein] + ATP = O-phospho-L-seryl-[protein] + ADP + H(+). It carries out the reaction L-threonyl-[protein] + ATP = O-phospho-L-threonyl-[protein] + ADP + H(+). Its activity is regulated as follows. Activated by phosphorylation in response to hyperosmotic stress within 5 minutes. Its function is as follows. May play a role in signal transduction of hyperosmotic response. In Oryza sativa subsp. japonica (Rice), this protein is Serine/threonine-protein kinase SAPK1 (SAPK1).